Here is a 666-residue protein sequence, read N- to C-terminus: Protein OS-9 (666 aa).

The first 30 residues, 1 to 30 (MAAEALLSSLLGLLFLGLLLPAHLTGGVGS), serve as a signal peptide directing secretion. One can recognise an MRH domain in the interval 108–230 (APCLLKTKDW…SIRTSRLCPH (123 aa)). Cysteines 110 and 123 form a disulfide. The a mannooligosaccharide derivative site is built by Trp117, Trp118, and Gln130. N-linked (GlcNAc...) asparagine glycosylation occurs at Asn177. 2 disulfide bridges follow: Cys181–Cys216 and Cys196–Cys228. A mannooligosaccharide derivative is bound by residues Asp182, Arg188, Glu212, and Tyr218. 4 disordered regions span residues 261 to 356 (RQAE…NVQV), 370 to 449 (EELK…SDRE), 505 to 540 (ESQSPELVQKYKKRRVVPQKPPPSPHPTEEEPEHRV), and 631 to 666 (EANKERQRQSELESNYRRVWGSPGGEDTGDLDEFDF). Basic and acidic residues-rich tracts occupy residues 263-281 (AESKQHEEKVTEEVQDTDH) and 294-310 (PKKEDVSPTKEDKESEF). Residues 320-332 (QATGTEEAQAGEQ) show a composition bias toward low complexity. 2 stretches are compositionally biased toward basic and acidic residues: residues 370–379 (EELKGAEKGK) and 395–412 (PQREAEAKGKGGEPRGLV). Positions 413 to 429 (EEEDGDEEEEDEDEDEQ) are enriched in acidic residues. Residues 434 to 449 (EFEKELEGMLLPSDRE) are compositionally biased toward basic and acidic residues. The segment covering 631 to 646 (EANKERQRQSELESNY) has biased composition (basic and acidic residues). The segment covering 657-666 (DTGDLDEFDF) has biased composition (acidic residues).

The protein belongs to the OS-9 family. In terms of assembly, component of the HRD1 complex, which comprises at least SYNV1/HRD1, DERL1/2, FAM8A1, HERPUD1/HERP, OS9, SEL1L and UBE2J1. FAM8A1 is stabilized by interaction with SYNV1, which prevents its proteasomal degradation. OS9 and UBE2J1 recruitment to the complex may be mediated by SEL1L. Through this complex, may interact with ERLEC1 and HSPA5. Interacts (via C-terminus) with CPNE6 (via second C2 domain); this interaction occurs in a calcium-dependent manner in vitro. Interacts with CREB3. In terms of processing, intramolecular disulfide bonds.

The protein localises to the endoplasmic reticulum lumen. Lectin component of the HRD1 complex, which functions in endoplasmic reticulum (ER) quality control and ER-associated degradation (ERAD). Specifically recognizes and binds improperly folded glycoproteins as well as hyperglycosylated proteins, retain them in the ER, and transfers them to the ubiquitination machinery and promote their degradation. Possible targets include TRPV4 as well as hyperglycosylated HSP90B1. This chain is Protein OS-9 (Os9), found in Rattus norvegicus (Rat).